Consider the following 85-residue polypeptide: Cell division topological specificity factor (85 aa).

The protein belongs to the MinE family.

Its function is as follows. Prevents the cell division inhibition by proteins MinC and MinD at internal division sites while permitting inhibition at polar sites. This ensures cell division at the proper site by restricting the formation of a division septum at the midpoint of the long axis of the cell. In Chromobacterium violaceum (strain ATCC 12472 / DSM 30191 / JCM 1249 / CCUG 213 / NBRC 12614 / NCIMB 9131 / NCTC 9757 / MK), this protein is Cell division topological specificity factor.